Here is a 231-residue protein sequence, read N- to C-terminus: uncharacterized protein (231 aa).

10–34 (IITGASSGIGAATAKALEKQGVKVV) serves as a coordination point for NADP(+). Residue serine 140 participates in substrate binding. The active-site Proton acceptor is tyrosine 153.

Belongs to the short-chain dehydrogenases/reductases (SDR) family.

This is an uncharacterized protein from Staphylococcus haemolyticus (strain JCSC1435).